A 315-amino-acid chain; its full sequence is tRNA dimethylallyltransferase (315 aa).

13–20 (GPTASGKT) contacts ATP. 15–20 (TASGKT) is a substrate binding site. Interaction with substrate tRNA regions lie at residues 38-41 (DSAL), 162-166 (QRLSR), 243-248 (RCVGYR), and 276-283 (KRQITWLR).

It belongs to the IPP transferase family. As to quaternary structure, monomer. It depends on Mg(2+) as a cofactor.

It carries out the reaction adenosine(37) in tRNA + dimethylallyl diphosphate = N(6)-dimethylallyladenosine(37) in tRNA + diphosphate. In terms of biological role, catalyzes the transfer of a dimethylallyl group onto the adenine at position 37 in tRNAs that read codons beginning with uridine, leading to the formation of N6-(dimethylallyl)adenosine (i(6)A). The polypeptide is tRNA dimethylallyltransferase (Vibrio vulnificus (strain YJ016)).